A 489-amino-acid chain; its full sequence is Phosphoenolpyruvate carboxykinase (ATP) (489 aa).

2 residues coordinate substrate: R53 and Y159. ATP is bound by residues H185, 208-216, D258, R300, 409-410, and S415; these read GLSGTGKTT and KI. R300 is a substrate binding site.

Belongs to the phosphoenolpyruvate carboxykinase (ATP) family.

It is found in the cytoplasm. The enzyme catalyses oxaloacetate + ATP = phosphoenolpyruvate + ADP + CO2. It functions in the pathway carbohydrate biosynthesis; gluconeogenesis. In terms of biological role, involved in the gluconeogenesis. Catalyzes the conversion of oxaloacetate (OAA) to phosphoenolpyruvate (PEP) through direct phosphoryl transfer between the nucleoside triphosphate and OAA. This Aeropyrum pernix (strain ATCC 700893 / DSM 11879 / JCM 9820 / NBRC 100138 / K1) protein is Phosphoenolpyruvate carboxykinase (ATP).